The chain runs to 359 residues: MTLESIMACCLSEEAKEARRINDEIERQLRRDKRDARRELKLLLLGTGESGKSTFIKQMRIIHGSGYSDEDKRGFTKLVYQNIFTAMQAMIRAMDTLKIPYKYEHNKAHAQLVREVDVEKVSAFENPYVDAIKSLWNDPGIQECYDRRREYQLSDSTKYYLNDLDRVADPSYLPTQQDVLRVRVPTTGIIEYPFDLQSVIFRMVDVGGQRSERRKWIHCFENVTSIMFLVALSEYDQVLVESDNENRMEESKALFRTIITYPWFQNSSVILFLNKKDLLEEKIMYSHLVDYFPEYDGPQRDAQAAREFILKMFVDLNPDSDKIIYSHFTCATDTENIRFVFAAVKDTILQLNLKEYNLV.

Residues Cys9 and Cys10 are each lipidated (S-palmitoyl cysteine). One can recognise a G-alpha domain in the interval Arg38–Val359. Residues Lys41–Thr54 form a G1 motif region. The GTP site is built by Ser50, Gly51, Lys52, Ser53, Thr54, Ser156, Leu180, Arg181, and Arg183. Residue Ser53 participates in Mg(2+) binding. Residues Asp178–Thr186 are G2 motif. Thr186 contacts Mg(2+). A G3 motif region spans residues Phe201–Arg210. Gln209 is modified (5-glutamyl histamine). A G4 motif region spans residues Ile270–Asp277. GTP is bound by residues Asn274, Lys275, Asp277, and Ala331. The segment at Thr329–Thr334 is G5 motif.

It belongs to the G-alpha family. G(q) subfamily. In terms of assembly, g proteins are composed of 3 units; alpha, beta and gamma. The alpha chain contains the guanine nucleotide binding site. Interacts (GDP-bound form) with RIC8A (via C-terminus); promoting GNAQ folding and association with the plasma membrane. Binds NHERF1. Forms a complex with PECAM1 and BDKRB2. Interacts with GAS2L2. In terms of processing, palmitoylated by ZDHHC3 and ZDHHC7. Palmitoylation occurs in the Golgi and participates in the localization of GNAQ to the plasma membrane. Post-translationally, histaminylated at Gln-209 residues by TGM2.

The protein localises to the cell membrane. It localises to the golgi apparatus. Its subcellular location is the nucleus. It is found in the nucleus membrane. The enzyme catalyses GTP + H2O = GDP + phosphate + H(+). Its function is as follows. Guanine nucleotide-binding proteins (G proteins) function as transducers downstream of G protein-coupled receptors (GPCRs) in numerous signaling cascades. The alpha chain contains the guanine nucleotide binding site and alternates between an active, GTP-bound state and an inactive, GDP-bound state. Signaling by an activated GPCR promotes GDP release and GTP binding. The alpha subunit has a low GTPase activity that converts bound GTP to GDP, thereby terminating the signal. Both GDP release and GTP hydrolysis are modulated by numerous regulatory proteins. Signaling is mediated via phospholipase C-beta-dependent inositol lipid hydrolysis for signal propagation: activates phospholipase C-beta: following GPCR activation, GNAQ activates PLC-beta (PLCB1, PLCB2, PLCB3 or PLCB4), leading to production of diacylglycerol (DAG) and inositol 1,4,5-trisphosphate (IP3). Required for platelet activation. Regulates B-cell selection and survival and is required to prevent B-cell-dependent autoimmunity. Regulates chemotaxis of BM-derived neutrophils and dendritic cells (in vitro). Transduces FFAR4 signaling in response to long-chain fatty acids (LCFAs). Together with GNA11, required for heart development. This Mus musculus (Mouse) protein is Guanine nucleotide-binding protein G(q) subunit alpha (Gnaq).